A 404-amino-acid polypeptide reads, in one-letter code: Serine palmitoyltransferase (404 aa).

Pyridoxal 5'-phosphate-binding positions include 112-113 (GY), S185, H213, and T241. Position 244 is an N6-(pyridoxal phosphate)lysine (K244).

Belongs to the class-II pyridoxal-phosphate-dependent aminotransferase family. Requires pyridoxal 5'-phosphate as cofactor.

It is found in the cytoplasm. The catalysed reaction is L-serine + hexadecanoyl-CoA + H(+) = 3-oxosphinganine + CO2 + CoA. The protein operates within lipid metabolism; sphingolipid metabolism. In terms of biological role, involved in de novo bacterial ceramide synthesis. Catalyzes the condensation of L-serine with palmitoyl-CoA (hexadecanoyl-CoA) to produce 3-oxosphinganine. Can also condense serine and C16:1-CoA, but shows a preference for palmitoyl-CoA. This chain is Serine palmitoyltransferase, found in Caulobacter vibrioides (strain NA1000 / CB15N) (Caulobacter crescentus).